Reading from the N-terminus, the 330-residue chain is Phospho-N-acetylmuramoyl-pentapeptide-transferase (330 aa).

Helical transmembrane passes span 13-33 (VFVF…LIPM), 58-78 (PTMG…FYAG), 83-103 (ILPL…DDFI), 113-133 (LYWN…AVYL), 152-172 (VSLG…STNA), 179-199 (LDGL…IVAM), 209-229 (MFSA…AYPA), 231-250 (IFMG…AIAI), and 304-324 (VKVV…GFFA).

It belongs to the glycosyltransferase 4 family. MraY subfamily. Mg(2+) serves as cofactor.

Its subcellular location is the cell membrane. It catalyses the reaction UDP-N-acetyl-alpha-D-muramoyl-L-alanyl-gamma-D-glutamyl-meso-2,6-diaminopimeloyl-D-alanyl-D-alanine + di-trans,octa-cis-undecaprenyl phosphate = di-trans,octa-cis-undecaprenyl diphospho-N-acetyl-alpha-D-muramoyl-L-alanyl-D-glutamyl-meso-2,6-diaminopimeloyl-D-alanyl-D-alanine + UMP. It participates in cell wall biogenesis; peptidoglycan biosynthesis. Catalyzes the initial step of the lipid cycle reactions in the biosynthesis of the cell wall peptidoglycan: transfers peptidoglycan precursor phospho-MurNAc-pentapeptide from UDP-MurNAc-pentapeptide onto the lipid carrier undecaprenyl phosphate, yielding undecaprenyl-pyrophosphoryl-MurNAc-pentapeptide, known as lipid I. This chain is Phospho-N-acetylmuramoyl-pentapeptide-transferase, found in Acetivibrio thermocellus (strain ATCC 27405 / DSM 1237 / JCM 9322 / NBRC 103400 / NCIMB 10682 / NRRL B-4536 / VPI 7372) (Clostridium thermocellum).